A 326-amino-acid chain; its full sequence is Ribosomal RNA small subunit methyltransferase H (326 aa).

S-adenosyl-L-methionine-binding positions include 45 to 47, Asp65, Asp113, and Gln120; that span reads GGH. Positions 299–326 are disordered; sequence PSAEEITRNPRSRSARLRAAERIAHDGR. Positions 316–326 are enriched in basic and acidic residues; it reads RAAERIAHDGR.

Belongs to the methyltransferase superfamily. RsmH family.

Its subcellular location is the cytoplasm. The enzyme catalyses cytidine(1402) in 16S rRNA + S-adenosyl-L-methionine = N(4)-methylcytidine(1402) in 16S rRNA + S-adenosyl-L-homocysteine + H(+). In terms of biological role, specifically methylates the N4 position of cytidine in position 1402 (C1402) of 16S rRNA. This is Ribosomal RNA small subunit methyltransferase H from Thermomicrobium roseum (strain ATCC 27502 / DSM 5159 / P-2).